Consider the following 886-residue polypeptide: DNA mismatch repair protein MutS (886 aa).

An ATP-binding site is contributed by 641–648 (GPNMAGKS).

Belongs to the DNA mismatch repair MutS family.

This protein is involved in the repair of mismatches in DNA. It is possible that it carries out the mismatch recognition step. This protein has a weak ATPase activity. This chain is DNA mismatch repair protein MutS, found in Rickettsia felis (strain ATCC VR-1525 / URRWXCal2) (Rickettsia azadi).